A 228-amino-acid polypeptide reads, in one-letter code: 7-cyano-7-deazaguanine synthase (228 aa).

An ATP-binding site is contributed by 10-20 (FSGGQDSTTLA). Positions 190, 205, 208, and 211 each coordinate Zn(2+).

This sequence belongs to the QueC family. Requires Zn(2+) as cofactor.

The catalysed reaction is 7-carboxy-7-deazaguanine + NH4(+) + ATP = 7-cyano-7-deazaguanine + ADP + phosphate + H2O + H(+). It participates in purine metabolism; 7-cyano-7-deazaguanine biosynthesis. Catalyzes the ATP-dependent conversion of 7-carboxy-7-deazaguanine (CDG) to 7-cyano-7-deazaguanine (preQ(0)). The sequence is that of 7-cyano-7-deazaguanine synthase from Helicobacter pylori (strain P12).